Consider the following 154-residue polypeptide: Myoglobin (154 aa).

The Globin domain occupies 2–148 (GLSDGEWQLV…FRNDIAAKYK (147 aa)). Residue serine 4 is modified to Phosphoserine. Histidine 65 serves as a coordination point for nitrite. Residue histidine 65 coordinates O2. Residue threonine 68 is modified to Phosphothreonine. Residue histidine 94 participates in heme b binding.

This sequence belongs to the globin family. In terms of assembly, monomeric.

The protein resides in the cytoplasm. It is found in the sarcoplasm. It catalyses the reaction Fe(III)-heme b-[protein] + nitric oxide + H2O = Fe(II)-heme b-[protein] + nitrite + 2 H(+). It carries out the reaction H2O2 + AH2 = A + 2 H2O. In terms of biological role, monomeric heme protein which primary function is to store oxygen and facilitate its diffusion within muscle tissues. Reversibly binds oxygen through a pentacoordinated heme iron and enables its timely and efficient release as needed during periods of heightened demand. Depending on the oxidative conditions of tissues and cells, and in addition to its ability to bind oxygen, it also has a nitrite reductase activity whereby it regulates the production of bioactive nitric oxide. Under stress conditions, like hypoxia and anoxia, it also protects cells against reactive oxygen species thanks to its pseudoperoxidase activity. The chain is Myoglobin (MB) from Lepilemur mustelinus (Weasel sportive lemur).